The following is a 234-amino-acid chain: Enolase-phosphatase E1 (234 aa).

The Mg(2+) site is built by Asp-13 and Glu-15. Substrate is bound by residues 127–128 and Lys-164; that span reads SS. Position 191 (Asp-191) interacts with Mg(2+).

It belongs to the HAD-like hydrolase superfamily. MasA/MtnC family. Monomer. It depends on Mg(2+) as a cofactor.

The protein localises to the cytoplasm. It localises to the nucleus. It catalyses the reaction 5-methylsulfanyl-2,3-dioxopentyl phosphate + H2O = 1,2-dihydroxy-5-(methylsulfanyl)pent-1-en-3-one + phosphate. The protein operates within amino-acid biosynthesis; L-methionine biosynthesis via salvage pathway; L-methionine from S-methyl-5-thio-alpha-D-ribose 1-phosphate: step 3/6. It functions in the pathway amino-acid biosynthesis; L-methionine biosynthesis via salvage pathway; L-methionine from S-methyl-5-thio-alpha-D-ribose 1-phosphate: step 4/6. In terms of biological role, bifunctional enzyme that catalyzes the enolization of 2,3-diketo-5-methylthiopentyl-1-phosphate (DK-MTP-1-P) into the intermediate 2-hydroxy-3-keto-5-methylthiopentenyl-1-phosphate (HK-MTPenyl-1-P), which is then dephosphorylated to form the acireductone 1,2-dihydroxy-3-keto-5-methylthiopentene (DHK-MTPene). The sequence is that of Enolase-phosphatase E1 from Podospora anserina (strain S / ATCC MYA-4624 / DSM 980 / FGSC 10383) (Pleurage anserina).